The following is a 294-amino-acid chain: Small ribosomal subunit protein uS2 (294 aa).

Belongs to the universal ribosomal protein uS2 family.

This chain is Small ribosomal subunit protein uS2 (rpsB), found in Mycoplasma pneumoniae (strain ATCC 29342 / M129 / Subtype 1) (Mycoplasmoides pneumoniae).